The sequence spans 962 residues: Glycine dehydrogenase (decarboxylating) (962 aa).

Lys-709 carries the N6-(pyridoxal phosphate)lysine modification.

Belongs to the GcvP family. The glycine cleavage system is composed of four proteins: P, T, L and H. Pyridoxal 5'-phosphate serves as cofactor.

The enzyme catalyses N(6)-[(R)-lipoyl]-L-lysyl-[glycine-cleavage complex H protein] + glycine + H(+) = N(6)-[(R)-S(8)-aminomethyldihydrolipoyl]-L-lysyl-[glycine-cleavage complex H protein] + CO2. Functionally, the glycine cleavage system catalyzes the degradation of glycine. The P protein binds the alpha-amino group of glycine through its pyridoxal phosphate cofactor; CO(2) is released and the remaining methylamine moiety is then transferred to the lipoamide cofactor of the H protein. The protein is Glycine dehydrogenase (decarboxylating) of Shewanella loihica (strain ATCC BAA-1088 / PV-4).